The chain runs to 422 residues: Lipoyl synthase, mitochondrial (422 aa).

The transit peptide at 1-34 (MAASSTRLRCLYASSAPAWKKSPSQSIISLSRHY) directs the protein to the mitochondrion. The segment covering 37-48 (TSSTTPSLNPDE) has biased composition (polar residues). Residues 37–70 (TSSTTPSLNPDESSSSSSSTIPKRRKTTTFRDKL) are disordered. The [4Fe-4S] cluster site is built by Cys146, Cys151, Cys157, Cys177, Cys181, Cys184, and Ser383. The Radical SAM core domain occupies 160-372 (GSDKSAATAT…RQRALEMGFL (213 aa)).

This sequence belongs to the radical SAM superfamily. Lipoyl synthase family. The cofactor is [4Fe-4S] cluster.

The protein resides in the mitochondrion. It carries out the reaction [[Fe-S] cluster scaffold protein carrying a second [4Fe-4S](2+) cluster] + N(6)-octanoyl-L-lysyl-[protein] + 2 oxidized [2Fe-2S]-[ferredoxin] + 2 S-adenosyl-L-methionine + 4 H(+) = [[Fe-S] cluster scaffold protein] + N(6)-[(R)-dihydrolipoyl]-L-lysyl-[protein] + 4 Fe(3+) + 2 hydrogen sulfide + 2 5'-deoxyadenosine + 2 L-methionine + 2 reduced [2Fe-2S]-[ferredoxin]. It participates in protein modification; protein lipoylation via endogenous pathway; protein N(6)-(lipoyl)lysine from octanoyl-[acyl-carrier-protein]: step 2/2. In terms of biological role, catalyzes the radical-mediated insertion of two sulfur atoms into the C-6 and C-8 positions of the octanoyl moiety bound to the lipoyl domains of lipoate-dependent enzymes, thereby converting the octanoylated domains into lipoylated derivatives. In Talaromyces stipitatus (strain ATCC 10500 / CBS 375.48 / QM 6759 / NRRL 1006) (Penicillium stipitatum), this protein is Lipoyl synthase, mitochondrial.